The following is a 193-amino-acid chain: Protein hunchback (193 aa).

2 disordered regions span residues 16–126 and 146–193; these read SHHH…ATTT and SNDK…KYMA. Residues 17-31 are compositionally biased toward basic residues; the sequence is HHHHHHHAHHSHHQH. Low complexity-rich tracts occupy residues 35–46 and 56–77; these read SNSNSNASSPHQ and SSNNLQLEQYLKQQQQQQQQQQ. Residues 89-99 are compositionally biased toward polar residues; the sequence is PSPSNNDQNSR. Residues 174 to 193 show a composition bias toward basic and acidic residues; sequence EPEKEHDLMSNSSEDMKYMA.

The protein belongs to the hunchback C2H2-type zinc-finger protein family.

It is found in the nucleus. Gap class segmentation protein that controls development of head structures. In Drosophila iki (Fruit fly), this protein is Protein hunchback (hb).